A 51-amino-acid chain; its full sequence is Large ribosomal subunit protein bL33 (51 aa).

The protein belongs to the bacterial ribosomal protein bL33 family.

This is Large ribosomal subunit protein bL33 from Marinobacter nauticus (strain ATCC 700491 / DSM 11845 / VT8) (Marinobacter aquaeolei).